The following is a 297-amino-acid chain: UDP-N-acetylenolpyruvoylglucosamine reductase (297 aa).

Residues 24-189 (KVGGNAEIFF…LKAIFKVNKG (166 aa)) enclose the FAD-binding PCMH-type domain. The active site involves R169. The active-site Proton donor is S218. E289 is an active-site residue.

It belongs to the MurB family. The cofactor is FAD.

It localises to the cytoplasm. It catalyses the reaction UDP-N-acetyl-alpha-D-muramate + NADP(+) = UDP-N-acetyl-3-O-(1-carboxyvinyl)-alpha-D-glucosamine + NADPH + H(+). Its pathway is cell wall biogenesis; peptidoglycan biosynthesis. In terms of biological role, cell wall formation. In Rickettsia canadensis (strain McKiel), this protein is UDP-N-acetylenolpyruvoylglucosamine reductase.